The chain runs to 162 residues: Inorganic pyrophosphatase (162 aa).

Residue glutamate 8 coordinates Mg(2+). Residues lysine 16, arginine 30, and tyrosine 42 each coordinate substrate. Residues aspartate 52, aspartate 57, aspartate 84, and aspartate 89 each contribute to the Mg(2+) site. Aspartate 89 (proton acceptor) is an active-site residue. Position 126 (tyrosine 126) interacts with substrate.

Belongs to the PPase family. In terms of assembly, homohexamer. Mg(2+) serves as cofactor.

Its subcellular location is the cytoplasm. The enzyme catalyses diphosphate + H2O = 2 phosphate + H(+). Catalyzes the hydrolysis of inorganic pyrophosphate (PPi) forming two phosphate ions. The protein is Inorganic pyrophosphatase of Mycobacterium bovis (strain ATCC BAA-935 / AF2122/97).